The sequence spans 395 residues: Chaperone protein DnaJ (395 aa).

Positions 4–69 constitute a J domain; sequence DYYEVLGVGR…DKRRRYDQFG (66 aa). The CR-type zinc-finger motif lies at 152-233; it reads GVEKTLKIKK…CHGEGIKQGE (82 aa). 8 residues coordinate Zn(2+): Cys165, Cys168, Cys181, Cys184, Cys207, Cys210, Cys221, and Cys224. CXXCXGXG motif repeat units follow at residues 165-172, 181-188, 207-214, and 221-228; these read CDVCNGTG, CPTCQGTG, CPTCGGEG, and CTACHGEG.

Belongs to the DnaJ family. As to quaternary structure, homodimer. Zn(2+) serves as cofactor.

Its subcellular location is the cytoplasm. Its function is as follows. Participates actively in the response to hyperosmotic and heat shock by preventing the aggregation of stress-denatured proteins and by disaggregating proteins, also in an autonomous, DnaK-independent fashion. Unfolded proteins bind initially to DnaJ; upon interaction with the DnaJ-bound protein, DnaK hydrolyzes its bound ATP, resulting in the formation of a stable complex. GrpE releases ADP from DnaK; ATP binding to DnaK triggers the release of the substrate protein, thus completing the reaction cycle. Several rounds of ATP-dependent interactions between DnaJ, DnaK and GrpE are required for fully efficient folding. Also involved, together with DnaK and GrpE, in the DNA replication of plasmids through activation of initiation proteins. In Prosthecochloris aestuarii (strain DSM 271 / SK 413), this protein is Chaperone protein DnaJ.